The sequence spans 794 residues: Phenylalanine--tRNA ligase beta subunit (794 aa).

Residues 40–158 form the tRNA-binding domain; that stretch reads NSLNSELVLG…LKKYLGKDVK (119 aa). The B5 domain occupies 402 to 477; sequence KNKTEFEIKI…RLYSYDNIQE (76 aa). Mg(2+) is bound by residues D455, D461, E464, and E465. The FDX-ACB domain occupies 702-794; the sequence is SKFQSSSRDL…NVKKMKVVIR (93 aa).

The protein belongs to the phenylalanyl-tRNA synthetase beta subunit family. Type 1 subfamily. As to quaternary structure, tetramer of two alpha and two beta subunits. Requires Mg(2+) as cofactor.

It is found in the cytoplasm. The enzyme catalyses tRNA(Phe) + L-phenylalanine + ATP = L-phenylalanyl-tRNA(Phe) + AMP + diphosphate + H(+). The sequence is that of Phenylalanine--tRNA ligase beta subunit from Mycoplasma capricolum subsp. capricolum (strain California kid / ATCC 27343 / NCTC 10154).